We begin with the raw amino-acid sequence, 338 residues long: Trans-enoyl reductase fsr4 (338 aa).

65–68 provides a ligand contact to NADP(+); the sequence is KDWK. Substrate is bound at residue 147-153; the sequence is AAFTAAC. NADP(+)-binding positions include 182–185, 205–208, tyrosine 227, and 277–278; these read SSAV, AGRA, and II.

The protein belongs to the zinc-containing alcohol dehydrogenase family.

Functionally, trans-enoyl reductase; part of the gene cluster that mediates the biosynthesis of fusarubins, highly pigmented naphthoquinones responsible for the coloration of the fruiting bodies. The non-reducing polyketide synthase FSR1 is responsible for the condensation of seven acetyl-CoA units to yield a haptaketide. After rings A and B are formed by aldol-type cyclization, the PKS-derived product is released as 6-O-demethylfusarubinaldehyde. Then, two hydroxyl groups at C-5 and C-10 are incorporated by FSR3, and simultaneously hydroxyl groups at C-6 and C-8 are methylated by FSR2. The aldehyde is, on the one hand, reduced by FSR3 to 8-O-methylfusarubin alcohol, which equilibrates mainly with 8-O-methylfusarubin and only small amounts of 8-O-methylnectriafurone. On the other hand, the aldehyde can be oxidized to form 8-O-methylfusarubinic acid, a reaction driven by FSR3 equilibrating with 8-O-methylfusarubinlactone, finally resulting in 8-O-methylanhydrofusarubinlactol after a further reduction step and loss of water. 8-O-Methylfusarubinic acid can also undergo decarboxylation, resulting in 8-O-methyl-13-hydroxynorjavanicin after another hydroxylation step at C-13. Both steps are most likely also accomplished by FSR3. No enzymatic function has been determined so far for either FSR4 and FSR5. Their deletion does not alter the product spectrum, but the possibility that they catalyze specific enzymatic steps during perithecium development cannot be ruled out. FSR4 might possess a regulatory function in the biosynthesis of fusarubins. The polypeptide is Trans-enoyl reductase fsr4 (Gibberella fujikuroi (strain CBS 195.34 / IMI 58289 / NRRL A-6831) (Bakanae and foot rot disease fungus)).